Reading from the N-terminus, the 371-residue chain is 3-isopropylmalate dehydrogenase B (371 aa).

79–93 (GSKVDHIRRGLDGPE) is a binding site for NAD(+). Positions 100, 110, 142, and 229 each coordinate substrate. The Mg(2+) site is built by Asp-229, Asp-254, and Asp-258. Residue 296–308 (GSAPTIAGKNIAN) participates in NAD(+) binding.

Belongs to the isocitrate and isopropylmalate dehydrogenases family. In terms of assembly, homodimer. The cofactor is Mg(2+). It depends on Mn(2+) as a cofactor.

It is found in the cytoplasm. It carries out the reaction (2R,3S)-3-isopropylmalate + NAD(+) = 4-methyl-2-oxopentanoate + CO2 + NADH. It participates in amino-acid biosynthesis; L-leucine biosynthesis; L-leucine from 3-methyl-2-oxobutanoate: step 3/4. Functionally, catalyzes the oxidation of 3-carboxy-2-hydroxy-4-methylpentanoate (3-isopropylmalate) to 3-carboxy-4-methyl-2-oxopentanoate. The product decarboxylates to 4-methyl-2 oxopentanoate. This chain is 3-isopropylmalate dehydrogenase B (leu2B), found in Aspergillus niger.